The chain runs to 478 residues: Cysteine--tRNA ligase (478 aa).

C29 provides a ligand contact to Zn(2+). A 'HIGH' region motif is present at residues 31–41 (PTVYDIPHIGN). 3 residues coordinate Zn(2+): C216, H241, and E245. A 'KMSKS' region motif is present at residues 274–278 (KMSKS). Residue K277 participates in ATP binding.

This sequence belongs to the class-I aminoacyl-tRNA synthetase family. As to quaternary structure, monomer. Zn(2+) serves as cofactor.

It is found in the cytoplasm. The catalysed reaction is tRNA(Cys) + L-cysteine + ATP = L-cysteinyl-tRNA(Cys) + AMP + diphosphate. The sequence is that of Cysteine--tRNA ligase from Orientia tsutsugamushi (strain Ikeda) (Rickettsia tsutsugamushi).